The following is a 148-amino-acid chain: Deoxyuridine 5'-triphosphate nucleotidohydrolase (148 aa).

Substrate-binding positions include 68 to 70 (RSG), asparagine 81, 85 to 87 (TID), and lysine 95.

This sequence belongs to the dUTPase family. Requires Mg(2+) as cofactor.

It carries out the reaction dUTP + H2O = dUMP + diphosphate + H(+). It participates in pyrimidine metabolism; dUMP biosynthesis; dUMP from dCTP (dUTP route): step 2/2. In terms of biological role, this enzyme is involved in nucleotide metabolism: it produces dUMP, the immediate precursor of thymidine nucleotides and it decreases the intracellular concentration of dUTP so that uracil cannot be incorporated into DNA. In Thermoanaerobacter sp. (strain X514), this protein is Deoxyuridine 5'-triphosphate nucleotidohydrolase.